The sequence spans 354 residues: Arginase-2, mitochondrial (354 aa).

The N-terminal 22 residues, M1–S22, are a transit peptide targeting the mitochondrion. 4 residues coordinate Mn(2+): H120, D143, H145, and D147. Substrate is bound by residues H145–N149, S156–N158, and E202. Mn(2+) contacts are provided by D251 and D253. Positions 265 and 296 each coordinate substrate.

The protein belongs to the arginase family. As to quaternary structure, homotrimer. Requires Mn(2+) as cofactor.

It localises to the mitochondrion. It carries out the reaction L-arginine + H2O = urea + L-ornithine. It participates in nitrogen metabolism; urea cycle; L-ornithine and urea from L-arginine: step 1/1. May play a role in the regulation of extra-urea cycle arginine metabolism and also in down-regulation of nitric oxide synthesis. Extrahepatic arginase functions to regulate L-arginine bioavailability to nitric oxid synthase (NOS). Arginine metabolism is a critical regulator of innate and adaptive immune responses. Seems to be involved in negative regulation of the survival capacity of activated CD4(+) and CD8(+) T cells. May suppress inflammation-related signaling in asthmatic airway epithelium. May contribute to the immune evasion of H.pylori by restricting M1 macrophage activation and polyamine metabolism. May play a role in promoting prenatal immune suppression. Regulates RPS6KB1 signaling, which promotes endothelial cell senescence and inflammation and implicates NOS3/eNOS dysfunction. Can inhibit endothelial autophagy independently of its enzymatic activity implicating mTORC2 signaling. Involved in vascular smooth muscle cell senescence and apoptosis independently of its enzymatic activity. The protein is Arginase-2, mitochondrial (Arg2) of Mus musculus (Mouse).